Consider the following 426-residue polypeptide: Glutamate-1-semialdehyde 2,1-aminomutase (426 aa).

Lys-265 carries the N6-(pyridoxal phosphate)lysine modification.

The protein belongs to the class-III pyridoxal-phosphate-dependent aminotransferase family. HemL subfamily. In terms of assembly, homodimer. Requires pyridoxal 5'-phosphate as cofactor.

It is found in the cytoplasm. The enzyme catalyses (S)-4-amino-5-oxopentanoate = 5-aminolevulinate. Its pathway is porphyrin-containing compound metabolism; protoporphyrin-IX biosynthesis; 5-aminolevulinate from L-glutamyl-tRNA(Glu): step 2/2. In Alcanivorax borkumensis (strain ATCC 700651 / DSM 11573 / NCIMB 13689 / SK2), this protein is Glutamate-1-semialdehyde 2,1-aminomutase.